The following is a 476-amino-acid chain: MRVLHVCSELFPLLKTGGLADVIGALPAAQLAEGADVRIILPAFPDLRRGIPETVLVREIDTFAGRVALRYGHYRGIGIYLIDAPALYDRAGSPYHDASLYAYSDNYQRFALLGWMACELACGLDGYWRPEVVHAHDWHAGLTCAYLAARGRPARSVFTVHNLAYQGLFSAHHLSELQLPAEFFQIYGLEFYGQISYLKAGLFFADHVTTVSPTYAKEITQPAFGYGMEGLLQALAHQGRLTGILNGVDSDIWDPQSDTLLPTRYDAENLQAKAINKTHLQTAMGLQLTESKPIFAVVSRLTAQKGLDLVLEALPELLALGGQLVVLGSGDTTLQEAFLAAAAEHSGQVGVQIGYHEAFSHRIIAGSDVILVPSRFEPCGLTQLYGLKYGTLPLVRHTGGLADTVVDCALENLADGSASGFVFNECEAQALVKAIRRAFVLWSRPKHWRHVQRHAMRLDFGWQLAAVDYLSLYRRL.

Lys15 contributes to the ADP-alpha-D-glucose binding site.

This sequence belongs to the glycosyltransferase 1 family. Bacterial/plant glycogen synthase subfamily.

It catalyses the reaction [(1-&gt;4)-alpha-D-glucosyl](n) + ADP-alpha-D-glucose = [(1-&gt;4)-alpha-D-glucosyl](n+1) + ADP + H(+). The protein operates within glycan biosynthesis; glycogen biosynthesis. In terms of biological role, synthesizes alpha-1,4-glucan chains using ADP-glucose. The polypeptide is Glycogen synthase (Yersinia pseudotuberculosis serotype O:1b (strain IP 31758)).